Here is a 397-residue protein sequence, read N- to C-terminus: Lysophospholipid transporter LplT (397 aa).

Residues Met1–Lys17 are Periplasmic-facing. The chain crosses the membrane as a helical span at residues Ala18 to Leu38. Residues Ala39–Pro52 lie on the Cytoplasmic side of the membrane. The helical transmembrane segment at Ile53 to Ala73 threads the bilayer. The Periplasmic segment spans residues Asp74–Leu90. A helical transmembrane segment spans residues Leu91–Val111. Over Gly112–Thr144 the chain is Cytoplasmic. The helical transmembrane segment at Ile145–Val165 threads the bilayer. Position 166 (Ala166) is a topological domain, periplasmic. Residues Leu167–Leu187 form a helical membrane-spanning segment. At Ala188 to Ser226 the chain is on the cytoplasmic side. The chain crosses the membrane as a helical span at residues Leu227–Leu247. At Gly248 to Thr256 the chain is on the periplasmic side. The helical transmembrane segment at Tyr257–Val277 threads the bilayer. The Cytoplasmic portion of the chain corresponds to Thr278 to Glu280. Residues Thr281–Leu301 traverse the membrane as a helical segment. Over Gln302 to Glu304 the chain is Periplasmic. A helical transmembrane segment spans residues Leu305 to Pro325. Topologically, residues Leu326–Ala343 are cytoplasmic. A helical transmembrane segment spans residues Ile344–Leu364. Over Ala365 to Val366 the chain is Periplasmic. A helical membrane pass occupies residues Met367 to Ile387. The Cytoplasmic portion of the chain corresponds to Thr388–His397.

It belongs to the major facilitator superfamily. LplT (TC 2.A.1.42) family.

It localises to the cell inner membrane. Its function is as follows. Catalyzes the facilitated diffusion of 2-acyl-glycero-3-phosphoethanolamine (2-acyl-GPE) into the cell. This Shigella sonnei (strain Ss046) protein is Lysophospholipid transporter LplT.